The sequence spans 76 residues: Exodeoxyribonuclease 7 small subunit (76 aa).

It belongs to the XseB family. In terms of assembly, heterooligomer composed of large and small subunits.

Its subcellular location is the cytoplasm. It carries out the reaction Exonucleolytic cleavage in either 5'- to 3'- or 3'- to 5'-direction to yield nucleoside 5'-phosphates.. In terms of biological role, bidirectionally degrades single-stranded DNA into large acid-insoluble oligonucleotides, which are then degraded further into small acid-soluble oligonucleotides. The sequence is that of Exodeoxyribonuclease 7 small subunit from Geobacter metallireducens (strain ATCC 53774 / DSM 7210 / GS-15).